Reading from the N-terminus, the 2376-residue chain is Serine/threonine-protein kinase WNK1 (2376 aa).

Disordered regions lie at residues Met1–Phe78 and Glu93–Asp201. Composition is skewed to low complexity over residues Ser10–Ser19 and Gly40–Gly49. 2 positions are modified to phosphoserine: Ser15 and Ser19. Positions Arg50–Arg66 are enriched in basic and acidic residues. Thr60 is subject to Phosphothreonine. Positions Thr125 to Ala158 are enriched in low complexity. Ser172 is modified (phosphoserine). The Protein kinase domain occupies Leu219–Phe477. Ser229 lines the ATP pocket. Chloride contacts are provided by Phe281 and Leu297. ATP is bound by residues Thr299–Met302 and Lys349. The Proton acceptor role is filled by Asp366. 2 residues coordinate chloride: Leu367 and Leu369. 2 positions are modified to phosphoserine; by autocatalysis: Ser376 and Ser380. The autoinhibitory domain stretch occupies residues Glu486–Ala553. The segment covering Gln571–Ser586 has biased composition (basic and acidic residues). Disordered stretches follow at residues Gln571 to Tyr641, Ala701 to Thr799, and Thr1026 to Lys1118. Composition is skewed to low complexity over residues Leu587–Gly601 and Ala614–Thr624. The interval Glu627 to Gln637 is interaction with KLHL3. Over residues Pro708–Gln752 the composition is skewed to low complexity. Residues Thr753–Glu766 are compositionally biased toward polar residues. Pro residues predominate over residues Pro1045–Thr1057. The segment covering Ser1079–Ser1089 has biased composition (polar residues). The segment covering Ile1097–Lys1118 has biased composition (basic residues). The short motif at Arg1257 to Val1260 is the RFXV motif 1 element. Ser1261 carries the phosphoserine modification. Disordered stretches follow at residues Ser1459 to Ser1478 and Ser1734 to Glu1770. Pro residues predominate over residues Ser1746 to Leu1756. Positions Arg1853–Val1856 match the RFXV motif 2 motif. Residues Asp1862 to His1878 show a composition bias toward basic and acidic residues. The disordered stretch occupies residues Asp1862–Val1942. Positions Ser1881–Val1899 are enriched in low complexity. Short sequence motifs (RFXV motif) lie at residues Arg1939–Val1942 and Arg1951–Val1954. Phosphoserine occurs at positions 1972, 1996, 2005, 2006, 2021, 2023, and 2026. Disordered stretches follow at residues Glu1991 to Lys2033 and Ala2110 to Thr2239. Positions Gly2116–Lys2128 are enriched in basic residues. A compositionally biased stretch (low complexity) spans Ser2129–Gly2141. 2 stretches are compositionally biased toward polar residues: residues Leu2146–Leu2161 and Glu2169–Thr2193. Low complexity predominate over residues Gly2207–Gln2223. Over residues Ala2224–Gly2238 the composition is skewed to polar residues. The amphipathic alpha-helix stretch occupies residues Ser2235 to Ala2255. Phosphoserine occurs at positions 2264, 2280, 2364, and 2366.

It belongs to the protein kinase superfamily. Ser/Thr protein kinase family. WNK subfamily. As to quaternary structure, interacts with WNK3. Interacts with WNK4; inhibiting the activity of WNK4. Interacts with SGK1; promoting its activation. Associates with the mTORC2 complex. Interacts with UVRAG. Interacts (via amphipathic alpha-helix region) with EMC2; promoting the ER membrane protein complex assembly. Requires Mg(2+) as cofactor. Post-translationally, autophosphorylated at Ser-376 and Ser-380, promoting its activity. Autophosphorylation at Ser-380 is inhibited by intracellular calcium. Phosphorylation at Thr-60 increases ability to activate SGK1. Ubiquitinated by the BCR(KLHL3) complex, leading to its degradation. Also ubiquitinated by the BCR(KLHL2) complex.

The protein localises to the cytoplasm. It localises to the nucleus. The protein resides in the cytoskeleton. Its subcellular location is the spindle. The enzyme catalyses L-seryl-[protein] + ATP = O-phospho-L-seryl-[protein] + ADP + H(+). It carries out the reaction L-threonyl-[protein] + ATP = O-phospho-L-threonyl-[protein] + ADP + H(+). Activated in response to hyperosmotic stress: cell shrinkage promotes formation of a membraneless compartment that concentrates WNK1 with its substrates, OXSR1/OSR1 and STK39/SPAK. Activation requires autophosphorylation of Ser-380 and, to a lower extent, Ser-376. Autophosphorylation and subsequent activation is inhibited by increases in intracellular ionic strength: Cl(-) potently inhibits WNK1 kinase activity via direct binding. Also inhibited by K(+) ions. Serine/threonine-protein kinase component of the WNK1-SPAK/OSR1 kinase cascade, which acts as a key regulator of blood pressure and regulatory volume increase by promoting ion influx. WNK1 mediates regulatory volume increase in response to hyperosmotic stress by acting as a molecular crowding sensor, which senses cell shrinkage and mediates formation of a membraneless compartment by undergoing liquid-liquid phase separation. The membraneless compartment concentrates WNK1 with its substrates, OXSR1/OSR1 and STK39/SPAK, promoting WNK1-dependent phosphorylation and activation of downstream kinases OXSR1/OSR1 and STK39/SPAK. Following activation, OXSR1/OSR1 and STK39/SPAK catalyze phosphorylation of ion cotransporters SLC12A1/NKCC2, SLC12A2/NKCC1, SLC12A5/KCC2 and SLC12A6/KCC3, regulating their activity. Phosphorylation of Na-K-Cl cotransporters SLC12A2/NKCC1 and SLC12A2/NKCC1 promote their activation and ion influx; simultaneously, phosphorylation of K-Cl cotransporters SLC12A5/KCC2 and SLC12A6/KCC3 inhibit their activity, blocking ion efflux. Also acts as a regulator of angiogenesis in endothelial cells via activation of OXSR1/OSR1 and STK39/SPAK: activation of OXSR1/OSR1 regulates chemotaxis and invasion, while STK39/SPAK regulates endothelial cell proliferation. Also acts independently of the WNK1-SPAK/OSR1 kinase cascade by catalyzing phosphorylation of other substrates, such as SYT2, PCF11 and NEDD4L. Mediates phosphorylation of SYT2, regulating SYT2 association with phospholipids and membrane-binding. Regulates mRNA export in the nucleus by mediating phosphorylation of PCF11, thereby decreasing the association between PCF11 and POLR2A/RNA polymerase II and promoting mRNA export to the cytoplasm. Acts as a negative regulator of autophagy. Required for the abscission step during mitosis, independently of the WNK1-SPAK/OSR1 kinase cascade. May also play a role in actin cytoskeletal reorganization. Also acts as a scaffold protein independently of its protein kinase activity: negatively regulates cell membrane localization of various transporters and channels, such as SLC4A4, SLC26A6, SLC26A9, TRPV4 and CFTR. Involved in the regulation of epithelial Na(+) channel (ENaC) by promoting activation of SGK1 in a kinase-independent manner: probably acts as a scaffold protein that promotes the recruitment of SGK1 to the mTORC2 complex in response to chloride, leading to mTORC2-dependent phosphorylation and activation of SGK1. Acts as an assembly factor for the ER membrane protein complex independently of its protein kinase activity: associates with EMC2 in the cytoplasm via its amphipathic alpha-helix, and prevents EMC2 ubiquitination and subsequent degradation, thereby promoting EMC2 stabilization. This Sus scrofa (Pig) protein is Serine/threonine-protein kinase WNK1.